Reading from the N-terminus, the 1956-residue chain is Sodium channel protein type 10 subunit alpha (1956 aa).

At 1 to 125 (MEFPIGSLET…FNLIRRTAIK (125 aa)) the chain is on the cytoplasmic side. The disordered stretch occupies residues 27–54 (QIAAKQGTKKAREKHREQKDQEEKPRPQ). Basic and acidic residues predominate over residues 40–54 (KHREQKDQEEKPRPQ). Residues 116 to 405 (FNLIRRTAIK…VTMAYEEQNQ (290 aa)) form an I repeat. Residues 126-149 (VSVHSWFSLFITVTILVNCVCMTR) form a helical membrane-spanning segment. Residues 150 to 154 (TDLPE) are Extracellular-facing. A helical membrane pass occupies residues 155–174 (KIEYVFTVIYTFEALIKILA). Over 175–187 (RGFCLNEFTYLRD) the chain is Cytoplasmic. The chain crosses the membrane as a helical span at residues 188–206 (PWNWLDFSVITLAYVGTAI). Residues 207–212 (DLRGIS) are Extracellular-facing. The chain crosses the membrane as a helical; Voltage-sensor span at residues 213–232 (GLRTFRVLRALKTVSVIPGL). At 233–248 (KVIVGALIHSVKKLAD) the chain is on the cytoplasmic side. The helical transmembrane segment at 249 to 272 (VTILTIFCLSVFALVGLQLFKGNL) threads the bilayer. Topologically, residues 273–341 (KNKCVKNDMA…PDFNYTSFDS (69 aa)) are extracellular. A disulfide bridge connects residues cysteine 276 and cysteine 319. N-linked (GlcNAc...) asparagine glycosylation is found at asparagine 284, asparagine 288, asparagine 312, and asparagine 335. The segment at residues 342 to 366 (FAWAFLSLFRLMTQDSWERLYQQTL) is an intramembrane region (pore-forming). Residues 367 to 373 (RTSGKIY) lie on the Extracellular side of the membrane. Residues 374 to 399 (MIFFVLVIFLGSFYLVNLILAVVTMA) form a helical membrane-spanning segment. At 400–659 (YEEQNQATTD…MWVKLKTILF (260 aa)) the chain is on the cytoplasmic side. 4 positions are modified to phosphoserine: serine 441, serine 444, serine 467, and serine 479. A compositionally biased stretch (polar residues) spans 443 to 454 (HSHNGSPLTSKN). 2 disordered regions span residues 443–485 (HSHN…YNQR) and 500–580 (SHGS…LAPG). The span at 561–570 (DSRHGEDEHQ) shows a compositional bias: basic and acidic residues. Phosphoserine occurs at positions 612 and 615. One copy of the II repeat lies at 647–911 (CCPMWVKLKT…EDDGEVNNLQ (265 aa)). The chain crosses the membrane as a helical span at residues 660-684 (GLVTDPFAELTITLCIVVNTIFMAM). The Extracellular portion of the chain corresponds to 685–695 (EHHGMSPTFEA). Residues 696–719 (MLQIGNIVFTIFFTAEMVFKIIAF) form a helical membrane-spanning segment. At 720-727 (DPYYYFQK) the chain is on the cytoplasmic side. A helical transmembrane segment spans residues 728-747 (KWNIFDCIIVTVSLLELGVA). Residues 748-753 (KKGSLS) are Extracellular-facing. Residues 754-773 (VLRSFRLLRVFKLAKSWPTL) form a helical; Voltage-sensor membrane-spanning segment. The Cytoplasmic segment spans residues 774-789 (NTLIKIIGNSVGALGN). Residues 790 to 810 (LTIILAIIVFVFALVGKQLLG) form a helical membrane-spanning segment. The Extracellular portion of the chain corresponds to 811 to 834 (ENYRNNRKNISAPHEDWPRWHMHD). Asparagine 819 is a glycosylation site (N-linked (GlcNAc...) asparagine). An intramembrane region (pore-forming) is located at residues 835–855 (FFHSFLIVFRILCGEWIENMW). Residues 856-864 (ACMEVGQKS) are Extracellular-facing. A disulfide bridge connects residues cysteine 857 and cysteine 866. Residues 865–890 (ICLILFLTVMVLGNLVVLNLFIALLL) form a helical membrane-spanning segment. Residues 891-1147 (NSFSADNLTA…GWQVRKTCYR (257 aa)) are Cytoplasmic-facing. Disordered regions lie at residues 963-986 (AANT…EHSD) and 1041-1089 (DHLT…GSTV). An III repeat occupies 1140-1449 (QVRKTCYRIV…KKYYNAMKKL (310 aa)). The chain crosses the membrane as a helical span at residues 1148 to 1171 (IVEHSWFESFIIFMILLSSGSLAF). Residues 1172–1184 (EDYYLDQKPTVKA) lie on the Extracellular side of the membrane. Residues 1185–1210 (LLEYTDRVFTFIFVFEMLLKWVAYGF) traverse the membrane as a helical segment. At 1211-1216 (KKYFTN) the chain is on the cytoplasmic side. The helical transmembrane segment at 1217 to 1238 (AWCWLDFLIVNISLISLTAKIL) threads the bilayer. Residues 1239–1242 (EYSE) are Extracellular-facing. Residues 1243–1264 (VAPIKALRTLRALRPLRALSRF) traverse the membrane as a helical; Voltage-sensor segment. Over 1265 to 1283 (EGMRVVVDALVGAIPSIMN) the chain is Cytoplasmic. A helical membrane pass occupies residues 1284-1311 (VLLVCLIFWLIFSIMGVNLFAGKFWRCI). 3 N-linked (GlcNAc...) asparagine glycosylation sites follow: asparagine 1312, asparagine 1328, and asparagine 1336. At 1312 to 1353 (NYTDGEFSLVPLSIVNNKSDCKIQNSTGSFFWVNVKVNFDNV) the chain is on the extracellular side. Residues 1354–1375 (AMGYLALLQVATFKGWMDIMYA) constitute an intramembrane region (pore-forming). Residues 1376 to 1391 (AVDSREVNMQPKWEDN) are Extracellular-facing. The helical transmembrane segment at 1392-1418 (VYMYLYFVIFIIFGGFFTLNLFVGVII) threads the bilayer. The Cytoplasmic segment spans residues 1419–1471 (DNFNQQKKKLGGQDIFMTEEQKKYYNAMKKLGSKKPQKPIPRPLNKFQGFVFD). Serine 1451 bears the Phosphoserine; by PKC mark. An IV repeat occupies 1458–1757 (IPRPLNKFQG…WEKFDPEATQ (300 aa)). The helical transmembrane segment at 1472–1495 (IVTRQAFDITIMVLICLNMITMMV) threads the bilayer. At 1496 to 1506 (ETDDQSEEKTK) the chain is on the extracellular side. The helical transmembrane segment at 1507–1530 (ILGKINQFFVAVFTGECVMKMFAL) threads the bilayer. Residues 1531–1536 (RQYYFT) lie on the Cytoplasmic side of the membrane. A helical transmembrane segment spans residues 1537–1560 (NGWNVFDFIVVVLSIASLIFSAIL). Topologically, residues 1561 to 1572 (KSLQSYFSPTLF) are extracellular. A helical; Voltage-sensor membrane pass occupies residues 1573 to 1594 (RVIRLARIGRILRLIRAAKGIR). At 1595-1609 (TLLFALMMSLPALFN) the chain is on the cytoplasmic side. A helical transmembrane segment spans residues 1610–1632 (IGLLLFLVMFIYSIFGMSSFPHV). At 1633 to 1646 (RWEAGIDDMFNFQT) the chain is on the extracellular side. The segment at residues 1647 to 1669 (FANSMLCLFQITTSAGWDGLLSP) is an intramembrane region (pore-forming). Over 1670–1697 (ILNTGPPYCDPNLPNSNGTRGDCGSPAV) the chain is Extracellular. Asparagine 1686 carries an N-linked (GlcNAc...) asparagine glycan. A helical membrane pass occupies residues 1698–1722 (GIIFFTTYIIISFLIMVNMYIAVIL). Residues 1723–1956 (ENFNVATEES…TSMELIAPGP (234 aa)) lie on the Cytoplasmic side of the membrane. In terms of domain architecture, IQ spans 1851-1880 (EDISATVIQKAYRSYVLHRSMALSNTPCVP). The disordered stretch occupies residues 1909 to 1956 (SETASATSFPPSYESVTRGLSDRVNMRTSSSIQNEDEATSMELIAPGP).

This sequence belongs to the sodium channel (TC 1.A.1.10) family. Nav1.8/SCN10A subfamily. In terms of assembly, the channel consists of an ion conducting pore forming alpha-subunit regulated by one or more associated auxiliary subunits SCN1B, SCN2B and SCN3B; electrophysiological properties may vary depending on the type of the associated beta subunits. Found in a number of complexes with PRX, DYNLT1 and PDZD2. Interacts with proteins such as FSTL1, PRX, DYNLT1, PDZD2, S100A10 and many others. Interacts with NEDD4 and NEDD4L. Post-translationally, ubiquitinated by NEDD4L; which promotes its endocytosis. In terms of processing, phosphorylation at Ser-1451 by PKC in a highly conserved cytoplasmic loop slows inactivation of the sodium channel and reduces peak sodium currents. Lacks the cysteine which covalently binds the conotoxin GVIIJ. This cysteine (position 816) is speculated in other sodium channel subunits alpha to be implied in covalent binding with the sodium channel subunit beta-2 or beta-4. Expressed in the dorsal root ganglia and sciatic nerve.

Its subcellular location is the cell membrane. It carries out the reaction Na(+)(in) = Na(+)(out). Tetrodotoxin-resistant channel that mediates the voltage-dependent sodium ion permeability of excitable membranes. Assuming opened or closed conformations in response to the voltage difference across the membrane, the protein forms a sodium-selective channel through which sodium ions may pass in accordance with their electrochemical gradient. Plays a role in neuropathic pain mechanisms. The protein is Sodium channel protein type 10 subunit alpha of Homo sapiens (Human).